We begin with the raw amino-acid sequence, 127 residues long: Fumarate reductase subunit C (127 aa).

The next 3 membrane-spanning stretches (helical) occupy residues 30-50 (ATVLPLIFFTICLLVGLGSLV), 67-87 (IVVALNIVALAGSLFHAQTFF), and 107-127 (VVVLAQWAAVAAITLLVLVIV).

This sequence belongs to the FrdC family. Part of an enzyme complex containing four subunits: a flavoprotein (FrdA), an iron-sulfur protein (FrdB), and two hydrophobic anchor proteins (FrdC and FrdD).

It is found in the cell inner membrane. Its function is as follows. Anchors the catalytic components of the fumarate reductase complex to the cell membrane, binds quinones. This Aliivibrio fischeri (strain ATCC 700601 / ES114) (Vibrio fischeri) protein is Fumarate reductase subunit C.